Consider the following 307-residue polypeptide: Malate dehydrogenase (307 aa).

NAD(+)-binding positions include 8–13 (GAGNVG) and Asp-32. Substrate is bound by residues Arg-81 and Arg-87. Residues Asn-94 and 117-119 (VSN) contribute to the NAD(+) site. 2 residues coordinate substrate: Asn-119 and Arg-150. His-174 serves as the catalytic Proton acceptor.

This sequence belongs to the LDH/MDH superfamily. MDH type 3 family.

The catalysed reaction is (S)-malate + NAD(+) = oxaloacetate + NADH + H(+). In terms of biological role, catalyzes the reversible oxidation of malate to oxaloacetate. This Dehalococcoides mccartyi (strain ATCC BAA-2100 / JCM 16839 / KCTC 5957 / BAV1) protein is Malate dehydrogenase.